Consider the following 629-residue polypeptide: Coiled-coil domain-containing protein 93 (629 aa).

The segment at 1–23 (MGLPKGPEGQGLPEVETREDEEQ) is disordered. A sufficient for interaction with CCDC22 region spans residues 1–428 (MGLPKGPEGQ…ETLKAERAPG (428 aa)). Coiled-coil stretches lie at residues 231–430 (LSAA…PGEK) and 558–599 (LRQM…LLEK). Phosphoserine is present on residues serine 298, serine 301, and serine 305. The segment at 446-629 (THNEDLDRRY…LLSKIKAKAS (184 aa)) is sufficient for interaction with WASHC2C.

Belongs to the CCDC93 family. In terms of assembly, component of the commander complex consisting of the CCC subcomplex and the retriever subcomplex. Component of the CCC (COMMD/CCDC22/CCDC93) subcomplex consisting of COMMD1, COMMD2, COMMD3, COMMD4, COMMD5, COMMD6, COMMD7, COMMD8, COMMD9, COMMD10, CCDC22 and CCDC93. Forms a coiled-coil heterodimer with CCDC22; this heterodimer interacts with the guanine nucleotide exchange factor DENND10; the interaction is direct. Interacts with WASHC1. Interacts directly with WASHC2C. Interacts with SNX17 and SNX31.

It localises to the early endosome. Component of the commander complex that is essential for endosomal recycling of transmembrane cargos; the commander complex is composed of composed of the CCC subcomplex and the retriever subcomplex. Component of the CCC complex, which is involved in the regulation of endosomal recycling of surface proteins, including integrins, signaling receptor and channels. The CCC complex associates with SNX17, retriever and WASH complexes to prevent lysosomal degradation and promote cell surface recycling of numerous cargos such as integrins ITGA5:ITGB1. Involved in copper-dependent ATP7A trafficking between the trans-Golgi network and vesicles in the cell periphery; the function is proposed to depend on its association within the CCC complex and cooperation with the WASH complex on early endosomes and is dependent on its interaction with WASHC2C. This Mus musculus (Mouse) protein is Coiled-coil domain-containing protein 93 (Ccdc93).